The following is a 359-amino-acid chain: ATPase ASNA1 homolog (359 aa).

Position 23 to 30 (23 to 30 (KGGVGKTT)) interacts with ATP. D63 is a catalytic residue. Positions 252 and 279 each coordinate ATP. Positions 291 and 294 each coordinate Zn(2+).

Belongs to the arsA ATPase family. As to quaternary structure, homodimer.

Its subcellular location is the cytoplasm. The protein localises to the endoplasmic reticulum. Its function is as follows. ATPase required for the post-translational delivery of tail-anchored (TA) proteins to the endoplasmic reticulum. Recognizes and selectively binds the transmembrane domain of TA proteins in the cytosol. This complex then targets to the endoplasmic reticulum by membrane-bound receptors, where the tail-anchored protein is released for insertion. This process is regulated by ATP binding and hydrolysis. ATP binding drives the homodimer towards the closed dimer state, facilitating recognition of newly synthesized TA membrane proteins. ATP hydrolysis is required for insertion. Subsequently, the homodimer reverts towards the open dimer state, lowering its affinity for the membrane-bound receptor, and returning it to the cytosol to initiate a new round of targeting. This chain is ATPase ASNA1 homolog, found in Trypanosoma cruzi (strain CL Brener).